The chain runs to 366 residues: Isocitrate dehydrogenase [NAD] subunit alpha, mitochondrial (366 aa).

A mitochondrion-targeting transit peptide spans 1–27 (MAGPAWISKVSRLLGAFHNPKQVTRGF). Lysine 77 bears the N6-succinyllysine mark. Residue threonine 101 is modified to Phosphothreonine. The substrate site is built by arginine 115, arginine 125, and arginine 146. An N6-acetyllysine modification is found at lysine 223. Residues aspartate 233, aspartate 257, and aspartate 261 each contribute to the Mg(2+) site. Position 343 is an N6-acetyllysine; alternate (lysine 343). Lysine 343 is subject to N6-succinyllysine; alternate. Residue lysine 350 is modified to N6-succinyllysine.

This sequence belongs to the isocitrate and isopropylmalate dehydrogenases family. Heterooligomer of subunits alpha (IDH3A), beta (IDH3B), and gamma (IDH3G) in the apparent ratio of 2:1:1. The heterodimer containing one IDH3A and one IDH3B subunit and the heterodimer containing one IDH3A and one IDH3G subunit assemble into a heterotetramer (which contains two subunits of IDH3A, one of IDH3B and one of IDH3G) and further into the heterooctamer. The cofactor is Mg(2+). Mn(2+) is required as a cofactor.

Its subcellular location is the mitochondrion. The enzyme catalyses D-threo-isocitrate + NAD(+) = 2-oxoglutarate + CO2 + NADH. The heterotetramer and the heterodimer composed of IDH3A and IDH3G subunits can be allosterically activated by citrate (CIT) or/and ADP, and the two activators can act independently or synergistically. The heterodimer composed of IDH3A and IDH3B subunits cannot be allosterically regulated and the allosteric regulation of the heterotetramer is through the IDH3G subunit and not the IDH3B subunit. The IDH3G subunit contains the allosteric site which consists of a CIT-binding site and an ADP-binding site, and the binding of CIT and ADP causes conformational changes at the allosteric site which are transmitted to the active site in the catalytic subunit (IDH3A) through a cascade of conformational changes at the heterodimer interface, leading to stabilization of the isocitrate-binding at the active site and thus activation of the enzyme. ATP can activate the heterotetramer and the heterodimer composed of IDH3A and IDH3G subunits at low concentrations but inhibits their activities at high concentrations, whereas ATP exhibits only inhibitory effect on the heterodimer composed of IDH3A and IDH3B subunits. In terms of biological role, catalytic subunit of the enzyme which catalyzes the decarboxylation of isocitrate (ICT) into alpha-ketoglutarate. The heterodimer composed of the alpha (IDH3A) and beta (IDH3B) subunits and the heterodimer composed of the alpha (IDH3A) and gamma (IDH3G) subunits, have considerable basal activity but the full activity of the heterotetramer (containing two subunits of IDH3A, one of IDH3B and one of IDH3G) requires the assembly and cooperative function of both heterodimers. The sequence is that of Isocitrate dehydrogenase [NAD] subunit alpha, mitochondrial from Pongo abelii (Sumatran orangutan).